Reading from the N-terminus, the 152-residue chain is Ribosome maturation factor RimP (152 aa).

Belongs to the RimP family.

It is found in the cytoplasm. Its function is as follows. Required for maturation of 30S ribosomal subunits. This Paraburkholderia xenovorans (strain LB400) protein is Ribosome maturation factor RimP.